The primary structure comprises 206 residues: Isopentenyl-diphosphate Delta-isomerase (206 aa).

The Mn(2+) site is built by His44 and His51. Residues 49-183 enclose the Nudix hydrolase domain; sequence ALHLAFSCHV…PWAFSPWLVL (135 aa). Residue Cys86 is part of the active site. A Mg(2+)-binding site is contributed by Cys86. Mn(2+) is bound at residue His88. Glu106 serves as a coordination point for Mg(2+). The Mn(2+) site is built by Glu133 and Glu135. The active site involves Glu135.

The protein belongs to the IPP isomerase type 1 family. Mg(2+) serves as cofactor. It depends on Mn(2+) as a cofactor.

It is found in the cytoplasm. The enzyme catalyses isopentenyl diphosphate = dimethylallyl diphosphate. It participates in isoprenoid biosynthesis; dimethylallyl diphosphate biosynthesis; dimethylallyl diphosphate from isopentenyl diphosphate: step 1/1. Catalyzes the 1,3-allylic rearrangement of the homoallylic substrate isopentenyl (IPP) to its highly electrophilic allylic isomer, dimethylallyl diphosphate (DMAPP). This Agromyces mediolanus (Corynebacterium mediolanum) protein is Isopentenyl-diphosphate Delta-isomerase.